The chain runs to 699 residues: Putative inactive kinesin-like protein KIN-7B (699 aa).

The Kinesin motor domain occupies 1 to 170 (MRAIQKKSLC…LLFGSCAKEV (170 aa)). Positions 179–247 (VMSDKALVKH…QSRLQDLLQS (69 aa)) form a coiled coil. The tract at residues 249-345 (GDHDLNRQVQ…VNSRHSRPSG (97 aa)) is disordered. The segment covering 264–275 (RSPPSVGMPPSV) has biased composition (low complexity). A compositionally biased stretch (basic and acidic residues) spans 276-298 (SRDDSSQVSHDDSDLYKEVRCIE). Over residues 313 to 338 (GESSSPQDSNMNSGLHGNDSNASVNS) the composition is skewed to polar residues.

The protein belongs to the TRAFAC class myosin-kinesin ATPase superfamily. Kinesin family. KIN-7 subfamily.

This is Putative inactive kinesin-like protein KIN-7B from Oryza sativa subsp. japonica (Rice).